The sequence spans 192 residues: Group XIIA secretory phospholipase A2 (192 aa).

Residues 1 to 25 form the signal peptide; that stretch reads MVTPRPAPARSPALLLLLLLATARG. 3 residues coordinate Ca(2+): Gly91, Pro93, and Phe95. His113 is an active-site residue. Asp114 contributes to the Ca(2+) binding site. The active site involves Asp128.

This sequence belongs to the phospholipase A2 family. Ca(2+) serves as cofactor.

It localises to the secreted. Its subcellular location is the cytoplasm. It carries out the reaction a 1,2-diacyl-sn-glycero-3-phosphocholine + H2O = a 1-acyl-sn-glycero-3-phosphocholine + a fatty acid + H(+). Functionally, PA2 catalyzes the calcium-dependent hydrolysis of the 2-acyl groups in 3-sn-phosphoglycerides. Does not exhibit detectable activity toward sn-2-arachidonoyl- or linoleoyl-phosphatidylcholine or -phosphatidylethanolamine. This Mus musculus (Mouse) protein is Group XIIA secretory phospholipase A2 (Pla2g12a).